The following is a 305-amino-acid chain: MPIKIPETLPAFDVLSSEGVMVMGQGRADRQDIRPLQIGLLNLMPKKIQTETQFARLIGATPLQIDLTLIRMTEHQSKHTSAAHMEAFYRPFAEVRDRKFDGLIITGAPIEHLEFADVTYWDELREVFAWTQTNVHATFGVCWGGMAMINHFHGVQKHILPAKAFGCFRHRNLAPASPYLRGFSDDCVIPVSRWTEMKQSEIDAVPGLTTLLGSPEVGPCLVEDPGHRALYIFNHFEYDTGTLKEEYDRDVENGTPINVPTNYYPDDDPARAPLNRWRSHAHLLYGNWLNEIYQTTEYDLEKIGT.

The Acyl-thioester intermediate role is filled by C142. The substrate site is built by K163 and S192. The active-site Proton acceptor is the H235. E237 is a catalytic residue. R249 lines the substrate pocket.

This sequence belongs to the MetA family.

It localises to the cytoplasm. It carries out the reaction L-homoserine + acetyl-CoA = O-acetyl-L-homoserine + CoA. It functions in the pathway amino-acid biosynthesis; L-methionine biosynthesis via de novo pathway; O-acetyl-L-homoserine from L-homoserine: step 1/1. In terms of biological role, transfers an acetyl group from acetyl-CoA to L-homoserine, forming acetyl-L-homoserine. The sequence is that of Homoserine O-acetyltransferase from Dinoroseobacter shibae (strain DSM 16493 / NCIMB 14021 / DFL 12).